A 217-amino-acid chain; its full sequence is Zinc finger CCHC-type and RNA-binding motif-containing protein 1 (217 aa).

In terms of domain architecture, RRM spans 10–88 (STVYVSNLPF…RVIKASIAID (79 aa)). The segment at 105–122 (SKCYECGESGHLSYACPK) adopts a CCHC-type zinc-finger fold. The tract at residues 120-217 (CPKNMLGERE…YFSDEEELSD (98 aa)) is disordered. Over residues 145–163 (PEEEIEEVEVSEEEGEDPA) the composition is skewed to acidic residues. Phosphoserine occurs at positions 155, 210, and 216.

As to quaternary structure, component of the U11/U12 snRNPs that are part of the U12-type spliceosome. Interacts with ZRSR1. Expressed at higher level in heart and testis, and at lower level in cerebellum. Weakly expressed at low level in liver.

It localises to the nucleus. The protein localises to the nucleoplasm. The protein is Zinc finger CCHC-type and RNA-binding motif-containing protein 1 (Zcrb1) of Mus musculus (Mouse).